We begin with the raw amino-acid sequence, 120 residues long: BLOC-1-related complex subunit 8 (120 aa).

Positions 101 to 120 (MNTSAQGHSQEKLSPPPSLA) are disordered. Serine 109 is subject to Phosphoserine.

This sequence belongs to the BORCS8 family. As to quaternary structure, component of the BLOC-one-related complex (BORC) which is composed of BLOC1S1, BLOC1S2, BORCS5, BORCS6, BORCS7, BORCS8, KXD1 and SNAPIN.

It is found in the lysosome membrane. Its function is as follows. As part of the BLOC-one-related complex (BORC), it plays a role in the movement and localization of lysosomes at the cell periphery. Associated with the cytosolic face of lysosomes, BORC recruits ARL8B to the lysosomal membrane and couples lysosomes to microtubule plus-end-directed kinesin motors, driving lysosome movement toward the cell periphery. The polypeptide is BLOC-1-related complex subunit 8 (Mus musculus (Mouse)).